We begin with the raw amino-acid sequence, 86 residues long: Small ribosomal subunit protein uS17 (86 aa).

Belongs to the universal ribosomal protein uS17 family. In terms of assembly, part of the 30S ribosomal subunit.

Its function is as follows. One of the primary rRNA binding proteins, it binds specifically to the 5'-end of 16S ribosomal RNA. The protein is Small ribosomal subunit protein uS17 of Rhizorhabdus wittichii (strain DSM 6014 / CCUG 31198 / JCM 15750 / NBRC 105917 / EY 4224 / RW1) (Sphingomonas wittichii).